The primary structure comprises 65 residues: Large ribosomal subunit protein bL35 (65 aa).

This sequence belongs to the bacterial ribosomal protein bL35 family.

The chain is Large ribosomal subunit protein bL35 from Acetivibrio thermocellus (strain ATCC 27405 / DSM 1237 / JCM 9322 / NBRC 103400 / NCIMB 10682 / NRRL B-4536 / VPI 7372) (Clostridium thermocellum).